The following is a 287-amino-acid chain: Protease HtpX (287 aa).

The next 2 helical transmembrane spans lie at 4 to 24 (IMLF…VLNI) and 36 to 56 (LSGL…ISLM). A Zn(2+)-binding site is contributed by histidine 143. The active site involves glutamate 144. Residue histidine 147 coordinates Zn(2+). 2 helical membrane-spanning segments follow: residues 158–178 (LMQG…ANIV) and 192–212 (MVYF…ASFI). Glutamate 221 provides a ligand contact to Zn(2+).

Belongs to the peptidase M48B family. The cofactor is Zn(2+).

The protein resides in the cell inner membrane. This Vibrio parahaemolyticus serotype O3:K6 (strain RIMD 2210633) protein is Protease HtpX.